The primary structure comprises 429 residues: Adenylosuccinate synthetase (429 aa).

GTP-binding positions include 12–18 (GDEGKGK) and 40–42 (GHT). Residue Asp-13 is the Proton acceptor of the active site. Residues Asp-13 and Gly-40 each coordinate Mg(2+). IMP contacts are provided by residues 13–16 (DEGK), 38–41 (NAGH), Thr-129, Arg-143, Gln-223, Thr-238, and Arg-302. Catalysis depends on His-41, which acts as the Proton donor. A substrate-binding site is contributed by 298-304 (TVTGRKR). Residues Arg-304, 330-332 (KLD), and 412-414 (STS) contribute to the GTP site.

This sequence belongs to the adenylosuccinate synthetase family. Homodimer. Requires Mg(2+) as cofactor.

The protein resides in the cytoplasm. The enzyme catalyses IMP + L-aspartate + GTP = N(6)-(1,2-dicarboxyethyl)-AMP + GDP + phosphate + 2 H(+). It participates in purine metabolism; AMP biosynthesis via de novo pathway; AMP from IMP: step 1/2. Its function is as follows. Plays an important role in the de novo pathway of purine nucleotide biosynthesis. Catalyzes the first committed step in the biosynthesis of AMP from IMP. This Novosphingobium aromaticivorans (strain ATCC 700278 / DSM 12444 / CCUG 56034 / CIP 105152 / NBRC 16084 / F199) protein is Adenylosuccinate synthetase.